The following is a 217-amino-acid chain: Glutathione S-transferase B (217 aa).

The GST N-terminal domain occupies 1–87 (PMTLGYWNIR…YIARKHNLCG (87 aa)). Glutathione is bound by residues 6–7 (YW), 45–49 (WLNEK), 58–59 (NL), and 71–72 (QS). Residues 89–207 (TEEETIRMDI…KSSRFLPKPL (119 aa)) form the GST C-terminal domain. Residue tyrosine 115 coordinates substrate.

The protein belongs to the GST superfamily. Mu family. Homodimer.

The protein localises to the cytoplasm. It carries out the reaction RX + glutathione = an S-substituted glutathione + a halide anion + H(+). It catalyses the reaction prostaglandin A2 + glutathione = prostaglandin A2-S-(R)-glutathione. The enzyme catalyses prostaglandin J2 + glutathione = prostaglandin J2-S-(R)-glutathione. The catalysed reaction is prostaglandin J2 + glutathione = prostaglandin J2-S-(S)-glutathione. It carries out the reaction prostaglandin A2 + glutathione = prostaglandin A2-S-(S)-glutathione. It catalyses the reaction 11(S)-hydroxy-14(S),15(S)-epoxy-(5Z,8Z,12E)-eicosatrienoate + glutathione = (11S,15S)-dihydroxy-14(R)-S-glutathionyl-(5Z,8Z,12E)-eicosatrienoate. Its function is as follows. Conjugation of reduced glutathione to a wide number of exogenous and endogenous hydrophobic electrophiles. Involved in the formation of glutathione conjugates of both prostaglandin A2 (PGA2) and prostaglandin J2 (PGJ2). Participates in the formation of novel hepoxilin regioisomers. The protein is Glutathione S-transferase B (GSTM1) of Cavia porcellus (Guinea pig).